The chain runs to 171 residues: Protein GrpE (171 aa).

The tract at residues 1-22 (MNHEHPDIESQQSAADAAAAAG) is disordered.

The protein belongs to the GrpE family. As to quaternary structure, homodimer.

The protein resides in the cytoplasm. Participates actively in the response to hyperosmotic and heat shock by preventing the aggregation of stress-denatured proteins, in association with DnaK and GrpE. It is the nucleotide exchange factor for DnaK and may function as a thermosensor. Unfolded proteins bind initially to DnaJ; upon interaction with the DnaJ-bound protein, DnaK hydrolyzes its bound ATP, resulting in the formation of a stable complex. GrpE releases ADP from DnaK; ATP binding to DnaK triggers the release of the substrate protein, thus completing the reaction cycle. Several rounds of ATP-dependent interactions between DnaJ, DnaK and GrpE are required for fully efficient folding. This is Protein GrpE from Stenotrophomonas maltophilia (strain R551-3).